The primary structure comprises 308 residues: Aspartate carbamoyltransferase catalytic subunit (308 aa).

Carbamoyl phosphate is bound by residues arginine 59 and threonine 60. Lysine 87 contributes to the L-aspartate binding site. 3 residues coordinate carbamoyl phosphate: arginine 109, histidine 139, and glutamine 142. L-aspartate contacts are provided by arginine 172 and arginine 224. 2 residues coordinate carbamoyl phosphate: alanine 265 and proline 266.

It belongs to the aspartate/ornithine carbamoyltransferase superfamily. ATCase family. In terms of assembly, heterododecamer (2C3:3R2) of six catalytic PyrB chains organized as two trimers (C3), and six regulatory PyrI chains organized as three dimers (R2).

The catalysed reaction is carbamoyl phosphate + L-aspartate = N-carbamoyl-L-aspartate + phosphate + H(+). The protein operates within pyrimidine metabolism; UMP biosynthesis via de novo pathway; (S)-dihydroorotate from bicarbonate: step 2/3. In terms of biological role, catalyzes the condensation of carbamoyl phosphate and aspartate to form carbamoyl aspartate and inorganic phosphate, the committed step in the de novo pyrimidine nucleotide biosynthesis pathway. This Streptococcus mutans serotype c (strain ATCC 700610 / UA159) protein is Aspartate carbamoyltransferase catalytic subunit.